The chain runs to 171 residues: O-acetyl-ADP-ribose deacetylase 2 (171 aa).

A Macro domain is found at 1–171 (MNKITVIQGD…NYDLYLKLLN (171 aa)). Substrate is bound by residues 10–11 (DI), N24, 32–34 (GVD), and 121–125 (STGIY). The Proton acceptor role is filled by D34.

The protein belongs to the MacroD-type family. YmdB subfamily. In terms of assembly, homodimer. Interacts with RNase III.

The catalysed reaction is 3''-O-acetyl-ADP-D-ribose + H2O = ADP-D-ribose + acetate + H(+). The enzyme catalyses 2''-O-acetyl-ADP-D-ribose + H2O = ADP-D-ribose + acetate + H(+). Deacetylates O-acetyl-ADP ribose to yield ADP-ribose and free acetate. Down-regulates ribonuclease 3 (RNase III) activity. Acts by interacting directly with the region of the ribonuclease that is required for dimerization/activation. This Pantoea vagans (strain C9-1) (Pantoea agglomerans (strain C9-1)) protein is O-acetyl-ADP-ribose deacetylase 2.